Reading from the N-terminus, the 323-residue chain is tRNA U34 carboxymethyltransferase (323 aa).

Carboxy-S-adenosyl-L-methionine contacts are provided by residues Lys91, Trp105, Lys110, Gly130, 152-154, 181-182, Met196, Tyr200, and Arg315; these read DPT and IE.

This sequence belongs to the class I-like SAM-binding methyltransferase superfamily. CmoB family. Homotetramer.

The enzyme catalyses carboxy-S-adenosyl-L-methionine + 5-hydroxyuridine(34) in tRNA = 5-carboxymethoxyuridine(34) in tRNA + S-adenosyl-L-homocysteine + H(+). Catalyzes carboxymethyl transfer from carboxy-S-adenosyl-L-methionine (Cx-SAM) to 5-hydroxyuridine (ho5U) to form 5-carboxymethoxyuridine (cmo5U) at position 34 in tRNAs. The protein is tRNA U34 carboxymethyltransferase of Salmonella enteritidis PT4 (strain P125109).